The sequence spans 252 residues: 3-deoxy-manno-octulosonate cytidylyltransferase (252 aa).

Belongs to the KdsB family.

The protein resides in the cytoplasm. The catalysed reaction is 3-deoxy-alpha-D-manno-oct-2-ulosonate + CTP = CMP-3-deoxy-beta-D-manno-octulosonate + diphosphate. It functions in the pathway nucleotide-sugar biosynthesis; CMP-3-deoxy-D-manno-octulosonate biosynthesis; CMP-3-deoxy-D-manno-octulosonate from 3-deoxy-D-manno-octulosonate and CTP: step 1/1. It participates in bacterial outer membrane biogenesis; lipopolysaccharide biosynthesis. In terms of biological role, activates KDO (a required 8-carbon sugar) for incorporation into bacterial lipopolysaccharide in Gram-negative bacteria. The protein is 3-deoxy-manno-octulosonate cytidylyltransferase of Vibrio campbellii (strain ATCC BAA-1116).